A 354-amino-acid chain; its full sequence is 3-dehydroquinate synthase (354 aa).

NAD(+) is bound by residues 106-110 (GVIGD), 130-131 (TS), Lys143, and Lys152. 3 residues coordinate Zn(2+): Glu185, His246, and His262.

The protein belongs to the sugar phosphate cyclases superfamily. Dehydroquinate synthase family. Co(2+) is required as a cofactor. Zn(2+) serves as cofactor. The cofactor is NAD(+).

Its subcellular location is the cytoplasm. The enzyme catalyses 7-phospho-2-dehydro-3-deoxy-D-arabino-heptonate = 3-dehydroquinate + phosphate. The protein operates within metabolic intermediate biosynthesis; chorismate biosynthesis; chorismate from D-erythrose 4-phosphate and phosphoenolpyruvate: step 2/7. In terms of biological role, catalyzes the conversion of 3-deoxy-D-arabino-heptulosonate 7-phosphate (DAHP) to dehydroquinate (DHQ). In Leuconostoc mesenteroides subsp. mesenteroides (strain ATCC 8293 / DSM 20343 / BCRC 11652 / CCM 1803 / JCM 6124 / NCDO 523 / NBRC 100496 / NCIMB 8023 / NCTC 12954 / NRRL B-1118 / 37Y), this protein is 3-dehydroquinate synthase.